The sequence spans 86 residues: Protein Tat (86 aa).

Residues methionine 1 to alanine 21 form a disordered region. Residues methionine 1–arginine 24 form an interaction with human CREBBP region. The interval methionine 1–glycine 48 is transactivation. Residues cysteine 22, cysteine 25, and cysteine 27 each contribute to the Zn(2+) site. The segment at cysteine 22–cysteine 37 is cysteine-rich. N6-acetyllysine; by host PCAF is present on lysine 28. Zn(2+) contacts are provided by cysteine 30, histidine 33, cysteine 34, and cysteine 37. The interval phenylalanine 38–glycine 48 is core. Residues tyrosine 47–glutamate 86 are disordered. Over residues glycine 48–proline 58 the composition is skewed to basic residues. The short motif at arginine 49 to arginine 57 is the Nuclear localization signal, RNA-binding (TAR), and protein transduction element. Positions arginine 49–glutamate 86 are interaction with the host capping enzyme RNGTT. N6-acetyllysine; by host EP300 and GCN5L2 is present on residues lysine 50 and lysine 51. Arginine 52 and arginine 53 each carry asymmetric dimethylarginine; by host PRMT6. Polar residues predominate over residues glutamine 60–glycine 79. Residue lysine 71 forms a Glycyl lysine isopeptide (Lys-Gly) (interchain with G-Cter in ubiquitin) linkage.

Belongs to the lentiviruses Tat family. Interacts with host CCNT1. Associates with the P-TEFb complex composed at least of Tat, P-TEFb (CDK9 and CCNT1), TAR RNA, RNA Pol II. Recruits the HATs CREBBP, TAF1/TFIID, EP300, PCAF and GCN5L2. Interacts with host KAT5/Tip60; this interaction targets the latter to degradation. Interacts with the host deacetylase SIRT1. Interacts with host capping enzyme RNGTT; this interaction stimulates RNGTT. Binds to host KDR, and to the host integrins ITGAV/ITGB3 and ITGA5/ITGB1. Interacts with host KPNB1/importin beta-1 without previous binding to KPNA1/importin alpha-1. Interacts with EIF2AK2. Interacts with host nucleosome assembly protein NAP1L1; this interaction may be required for the transport of Tat within the nucleus, since the two proteins interact at the nuclear rim. Interacts with host C1QBP/SF2P32; this interaction involves lysine-acetylated Tat. Interacts with the host chemokine receptors CCR2, CCR3 and CXCR4. Interacts with host DPP4/CD26; this interaction may trigger an anti-proliferative effect. Interacts with host LDLR. Interacts with the host extracellular matrix metalloproteinase MMP1. Interacts with host PRMT6; this interaction mediates Tat's methylation. Interacts with, and is ubiquitinated by MDM2/Hdm2. Interacts with host PSMC3 and HTATIP2. Interacts with STAB1; this interaction may overcome SATB1-mediated repression of IL2 and IL2RA (interleukin) in T cells by binding to the same domain than HDAC1. Interacts (when acetylated) with human CDK13, thereby increasing HIV-1 mRNA splicing and promoting the production of the doubly spliced HIV-1 protein Nef. Interacts with host TBP; this interaction modulates the activity of transcriptional pre-initiation complex. Interacts with host RELA. Interacts with host PLSCR1; this interaction negatively regulates Tat transactivation activity by altering its subcellular distribution. In terms of processing, asymmetrical arginine methylation by host PRMT6 seems to diminish the transactivation capacity of Tat and affects the interaction with host CCNT1. Acetylation by EP300, CREBBP, GCN5L2/GCN5 and PCAF regulates the transactivation activity of Tat. EP300-mediated acetylation of Lys-50 promotes dissociation of Tat from the TAR RNA through the competitive binding to PCAF's bromodomain. In addition, the non-acetylated Tat's N-terminus can also interact with PCAF. PCAF-mediated acetylation of Lys-28 enhances Tat's binding to CCNT1. Lys-50 is deacetylated by SIRT1. Post-translationally, polyubiquitination by host MDM2 does not target Tat to degradation, but activates its transactivation function and fosters interaction with CCNT1 and TAR RNA. In terms of processing, phosphorylated by EIF2AK2 on serine and threonine residues adjacent to the basic region important for TAR RNA binding and function. Phosphorylation of Tat by EIF2AK2 is dependent on the prior activation of EIF2AK2 by dsRNA.

The protein resides in the host nucleus. It localises to the host nucleolus. The protein localises to the host cytoplasm. Its subcellular location is the secreted. In terms of biological role, transcriptional activator that increases RNA Pol II processivity, thereby increasing the level of full-length viral transcripts. Recognizes a hairpin structure at the 5'-LTR of the nascent viral mRNAs referred to as the transactivation responsive RNA element (TAR) and recruits the cyclin T1-CDK9 complex (P-TEFb complex) that will in turn hyperphosphorylate the RNA polymerase II to allow efficient elongation. The CDK9 component of P-TEFb and other Tat-activated kinases hyperphosphorylate the C-terminus of RNA Pol II that becomes stabilized and much more processive. Other factors such as HTATSF1/Tat-SF1, SUPT5H/SPT5, and HTATIP2 are also important for Tat's function. Besides its effect on RNA Pol II processivity, Tat induces chromatin remodeling of proviral genes by recruiting the histone acetyltransferases (HATs) CREBBP, EP300 and PCAF to the chromatin. This also contributes to the increase in proviral transcription rate, especially when the provirus integrates in transcriptionally silent region of the host genome. To ensure maximal activation of the LTR, Tat mediates nuclear translocation of NF-kappa-B by interacting with host RELA. Through its interaction with host TBP, Tat may also modulate transcription initiation. Tat can reactivate a latently infected cell by penetrating in it and transactivating its LTR promoter. In the cytoplasm, Tat is thought to act as a translational activator of HIV-1 mRNAs. Its function is as follows. Extracellular circulating Tat can be endocytosed by surrounding uninfected cells via the binding to several surface receptors such as CD26, CXCR4, heparan sulfate proteoglycans (HSPG) or LDLR. Neurons are rarely infected, but they internalize Tat via their LDLR. Through its interaction with nuclear HATs, Tat is potentially able to control the acetylation-dependent cellular gene expression. Modulates the expression of many cellular genes involved in cell survival, proliferation or in coding for cytokines or cytokine receptors. Tat plays a role in T-cell and neurons apoptosis. Tat induced neurotoxicity and apoptosis probably contribute to neuroAIDS. Circulating Tat also acts as a chemokine-like and/or growth factor-like molecule that binds to specific receptors on the surface of the cells, affecting many cellular pathways. In the vascular system, Tat binds to ITGAV/ITGB3 and ITGA5/ITGB1 integrins dimers at the surface of endothelial cells and competes with bFGF for heparin-binding sites, leading to an excess of soluble bFGF. In Homo sapiens (Human), this protein is Protein Tat.